The sequence spans 357 residues: Nicotinate-nucleotide--dimethylbenzimidazole phosphoribosyltransferase (357 aa).

Catalysis depends on E323, which acts as the Proton acceptor.

Belongs to the CobT family.

The enzyme catalyses 5,6-dimethylbenzimidazole + nicotinate beta-D-ribonucleotide = alpha-ribazole 5'-phosphate + nicotinate + H(+). The protein operates within nucleoside biosynthesis; alpha-ribazole biosynthesis; alpha-ribazole from 5,6-dimethylbenzimidazole: step 1/2. Catalyzes the synthesis of alpha-ribazole-5'-phosphate from nicotinate mononucleotide (NAMN) and 5,6-dimethylbenzimidazole (DMB). In Nitratidesulfovibrio vulgaris (strain ATCC 29579 / DSM 644 / CCUG 34227 / NCIMB 8303 / VKM B-1760 / Hildenborough) (Desulfovibrio vulgaris), this protein is Nicotinate-nucleotide--dimethylbenzimidazole phosphoribosyltransferase.